Here is a 134-residue protein sequence, read N- to C-terminus: Transcription antitermination protein NusB (134 aa).

Belongs to the NusB family.

In terms of biological role, involved in transcription antitermination. Required for transcription of ribosomal RNA (rRNA) genes. Binds specifically to the boxA antiterminator sequence of the ribosomal RNA (rrn) operons. This is Transcription antitermination protein NusB from Shewanella sediminis (strain HAW-EB3).